Here is a 279-residue protein sequence, read N- to C-terminus: Beta-porphyranase E (279 aa).

The first 18 residues, methionine 1–glycine 18, serve as a signal peptide directing secretion. The GH16 domain occupies glutamine 19–valine 277. Substrate-binding residues include tryptophan 56, arginine 60, glutamate 141, glutamate 146, and glutamate 243. Glutamate 141 functions as the Nucleophile in the catalytic mechanism. Residue glutamate 146 is the Proton donor of the active site.

It belongs to the glycosyl hydrolase 16 family.

It is found in the periplasm. It carries out the reaction Hydrolysis of beta-D-galactopyranose-(1-&gt;4)-alpha-L-galactopyranose-6-sulfate linkages in porphyran.. In terms of biological role, cleaves the sulfated polysaccharide porphyran at the (1-&gt;4) linkages between beta-D-galactopyranose and alpha-L-galactopyranose-6-sulfate, forming mostly the disaccharide alpha-L-galactopyranose-6-sulfate-(1-&gt;3)-beta-D-galactose. This is Beta-porphyranase E (porE) from Zobellia galactanivorans (strain DSM 12802 / CCUG 47099 / CIP 106680 / NCIMB 13871 / Dsij).